The primary structure comprises 187 residues: MSGGREIALLGGSFNPPHVAHLMAAWWALATQGVSEVWLLPTFRHPFGKDLAPFEDRLEMCRLAARALRGVHVCGAEAELAADPLVGKTARTLEHLAAKHPDHRFALIVGADILAETAKWYRWDRVQALARVIVVGRQGHPPVPGAPDLPAISSTEIRARLARGEDVRGLVPEKVLRYVEEKGLYRG.

The protein belongs to the NadD family.

The enzyme catalyses nicotinate beta-D-ribonucleotide + ATP + H(+) = deamido-NAD(+) + diphosphate. Its pathway is cofactor biosynthesis; NAD(+) biosynthesis; deamido-NAD(+) from nicotinate D-ribonucleotide: step 1/1. In terms of biological role, catalyzes the reversible adenylation of nicotinate mononucleotide (NaMN) to nicotinic acid adenine dinucleotide (NaAD). The chain is Probable nicotinate-nucleotide adenylyltransferase from Anaeromyxobacter sp. (strain K).